The chain runs to 1365 residues: Glucosyltransferase-S (1365 aa).

The segment at residues 1–36 (MEKNLRYKLHKVKKQWVAIGVTTVTLSFLAGGQVVA) is a signal peptide (or 37). Composition is skewed to polar residues over residues 80–89 (DQTATSQVSP) and 127–146 (RQSA…TSDQ). Disordered regions lie at residues 80 to 99 (DQTA…DNQV) and 127 to 152 (RQSA…HLET). 2 Cell wall-binding repeats span residues 146-166 (QPGH…NGQR) and 168-187 (KNYS…QTGE). A catalytic; approximate region spans residues 200 to 1000 (QDNVPDSYQA…KPIDPSVKIT (801 aa)). Cell wall-binding repeat units lie at residues 1052–1071 (ANGF…NGQE), 1073–1092 (KNRF…DGKM), 1093–1112 (ATGK…NGKQ), 1113–1133 (LKEG…NGRT), 1136–1159 (NKGF…DGTI), 1160–1179 (AIGL…YGYQ), 1234–1253 (LTGE…NGVQ), 1278–1298 (GKGW…SGQV), 1299–1318 (LTGL…KGIQ), and 1343–1362 (RDRW…NGLA).

It belongs to the glycosyl hydrolase 70 family.

The enzyme catalyses [(1-&gt;6)-alpha-D-glucosyl](n) + sucrose = [(1-&gt;6)-alpha-D-glucosyl](n+1) + D-fructose. With respect to regulation, glucan synthesis by GTF-S is independent of primer glucan unlike GTF-I. Functionally, production of extracellular glucans, that are thought to play a key role in the development of the dental plaque because of their ability to adhere to smooth surfaces and mediate the aggregation of bacterial cells and food debris. The sequence is that of Glucosyltransferase-S (gtfS) from Streptococcus downei (Streptococcus sobrinus).